We begin with the raw amino-acid sequence, 310 residues long: Homoserine kinase (310 aa).

An ATP-binding site is contributed by 91 to 101; the sequence is PIGSGLGSSAC.

Belongs to the GHMP kinase family. Homoserine kinase subfamily.

It is found in the cytoplasm. The enzyme catalyses L-homoserine + ATP = O-phospho-L-homoserine + ADP + H(+). Its pathway is amino-acid biosynthesis; L-threonine biosynthesis; L-threonine from L-aspartate: step 4/5. In terms of biological role, catalyzes the ATP-dependent phosphorylation of L-homoserine to L-homoserine phosphate. In Escherichia coli O157:H7, this protein is Homoserine kinase.